A 341-amino-acid polypeptide reads, in one-letter code: L-threonine 3-dehydrogenase (341 aa).

Cys-38 serves as a coordination point for Zn(2+). Residues Thr-40 and His-43 each act as charge relay system in the active site. Residues His-63, Glu-64, Cys-93, Cys-96, Cys-99, and Cys-107 each contribute to the Zn(2+) site. NAD(+) contacts are provided by residues Ile-175, Asp-195, Arg-200, Leu-262–Ile-264, and Ile-286–Tyr-287.

This sequence belongs to the zinc-containing alcohol dehydrogenase family. In terms of assembly, homotetramer. Zn(2+) serves as cofactor.

It is found in the cytoplasm. It carries out the reaction L-threonine + NAD(+) = (2S)-2-amino-3-oxobutanoate + NADH + H(+). The protein operates within amino-acid degradation; L-threonine degradation via oxydo-reductase pathway; glycine from L-threonine: step 1/2. Functionally, catalyzes the NAD(+)-dependent oxidation of L-threonine to 2-amino-3-ketobutyrate. This is L-threonine 3-dehydrogenase from Shewanella sp. (strain MR-7).